Here is a 469-residue protein sequence, read N- to C-terminus: ATP synthase subunit beta (469 aa).

155-162 (GGAGVGKT) lines the ATP pocket.

It belongs to the ATPase alpha/beta chains family. In terms of assembly, F-type ATPases have 2 components, CF(1) - the catalytic core - and CF(0) - the membrane proton channel. CF(1) has five subunits: alpha(3), beta(3), gamma(1), delta(1), epsilon(1). CF(0) has three main subunits: a(1), b(2) and c(9-12). The alpha and beta chains form an alternating ring which encloses part of the gamma chain. CF(1) is attached to CF(0) by a central stalk formed by the gamma and epsilon chains, while a peripheral stalk is formed by the delta and b chains.

The protein localises to the cell inner membrane. It carries out the reaction ATP + H2O + 4 H(+)(in) = ADP + phosphate + 5 H(+)(out). In terms of biological role, produces ATP from ADP in the presence of a proton gradient across the membrane. The catalytic sites are hosted primarily by the beta subunits. This chain is ATP synthase subunit beta, found in Syntrophobacter fumaroxidans (strain DSM 10017 / MPOB).